The following is an 877-amino-acid chain: Protein P (877 aa).

Positions 1-183 are terminal protein domain (TP); sequence MHPFSQLFRN…GKPYSWGHRQ (183 aa). Positions 184-382 are spacer; that stretch reads LEQHNGQQHE…YCLHHIVSSL (199 aa). A compositionally biased stretch (basic and acidic residues) spans 185–198; it reads EQHNGQQHESHLQS. Residues 185–347 form a disordered region; it reads EQHNGQQHES…PSSSGLCGGT (163 aa). Residues 233–242 are compositionally biased toward polar residues; sequence FGESQKSART. A compositionally biased stretch (low complexity) spans 267-281; the sequence is QQGSSQVSSPRSKSS. 2 stretches are compositionally biased toward polar residues: residues 282–302 and 338–347; these read NFRNQTQANHSSWNQRHPTWY and PSSSGLCGGT. The segment at 383-723 is polymerase/reverse transcriptase domain (RT); the sequence is EDWGPCTISG…YAELWPVARQ (341 aa). The Reverse transcriptase domain maps to 393–634; the sequence is DVTIRSPRTP…HHLHFMGYVI (242 aa). 3 residues coordinate Mg(2+): Asp-465, Asp-585, and Asp-586.

It belongs to the hepadnaviridae P protein family.

It catalyses the reaction DNA(n) + a 2'-deoxyribonucleoside 5'-triphosphate = DNA(n+1) + diphosphate. The enzyme catalyses Endonucleolytic cleavage to 5'-phosphomonoester.. Activated by host HSP70 and HSP40 in vitro to be able to bind the epsilon loop of the pgRNA. Because deletion of the RNase H region renders the protein partly chaperone-independent, the chaperones may be needed indirectly to relieve occlusion of the RNA-binding site by this domain. Inhibited by several reverse-transcriptase inhibitors: Lamivudine, Adefovir and Entecavir. Functionally, multifunctional enzyme that converts the viral RNA genome into dsDNA in viral cytoplasmic capsids. This enzyme displays a DNA polymerase activity that can copy either DNA or RNA templates, and a ribonuclease H (RNase H) activity that cleaves the RNA strand of RNA-DNA heteroduplexes in a partially processive 3'- to 5'-endonucleasic mode. Neo-synthesized pregenomic RNA (pgRNA) are encapsidated together with the P protein, and reverse-transcribed inside the nucleocapsid. Initiation of reverse-transcription occurs first by binding the epsilon loop on the pgRNA genome, and is initiated by protein priming, thereby the 5'-end of (-)DNA is covalently linked to P protein. Partial (+)DNA is synthesized from the (-)DNA template and generates the relaxed circular DNA (RC-DNA) genome. After budding and infection, the RC-DNA migrates in the nucleus, and is converted into a plasmid-like covalently closed circular DNA (cccDNA). The activity of P protein does not seem to be necessary for cccDNA generation, and is presumably released from (+)DNA by host nuclear DNA repair machinery. This chain is Protein P, found in Arctic squirrel hepatitis virus (ASHV).